A 196-amino-acid polypeptide reads, in one-letter code: ATP-dependent Clp protease proteolytic subunit (196 aa).

The active-site Nucleophile is the Ser98. His123 is a catalytic residue.

Belongs to the peptidase S14 family. In terms of assembly, fourteen ClpP subunits assemble into 2 heptameric rings which stack back to back to give a disk-like structure with a central cavity, resembling the structure of eukaryotic proteasomes.

It localises to the cytoplasm. It carries out the reaction Hydrolysis of proteins to small peptides in the presence of ATP and magnesium. alpha-casein is the usual test substrate. In the absence of ATP, only oligopeptides shorter than five residues are hydrolyzed (such as succinyl-Leu-Tyr-|-NHMec, and Leu-Tyr-Leu-|-Tyr-Trp, in which cleavage of the -Tyr-|-Leu- and -Tyr-|-Trp bonds also occurs).. Its function is as follows. Cleaves peptides in various proteins in a process that requires ATP hydrolysis. Has a chymotrypsin-like activity. Plays a major role in the degradation of misfolded proteins. This is ATP-dependent Clp protease proteolytic subunit from Acidobacterium capsulatum (strain ATCC 51196 / DSM 11244 / BCRC 80197 / JCM 7670 / NBRC 15755 / NCIMB 13165 / 161).